We begin with the raw amino-acid sequence, 169 residues long: Succinate dehydrogenase cytochrome b560 subunit, mitochondrial (169 aa).

Residues 1 to 29 (MAALLLRHVGRHCLRAHFSPQLCIRNAVP) constitute a mitochondrion transit peptide. Topologically, residues 30–65 (LGTTAKEEMERFWNKNIGSNRPLSPHITIYSWSLPM) are mitochondrial matrix. Residues 66–90 (AMSICHRGTGIALSAGVSLFGMSAL) traverse the membrane as a helical segment. The Mitochondrial intermembrane segment spans residues 91–110 (LLPGNFESYLELVKSLCLGP). Residues 111-139 (ALIHTAKFALVFPLMYHTWNGIRHLMWDL) traverse the membrane as a helical segment. H127 contacts heme b. Residues 140-146 (GKGLKIP) lie on the Mitochondrial matrix side of the membrane. A helical transmembrane segment spans residues 147-167 (QLYQSGVVVLVLTVLSSMGLA). Topologically, residues 168-169 (AM) are mitochondrial intermembrane.

The protein belongs to the cytochrome b560 family. In terms of assembly, component of complex II composed of four subunits: the flavoprotein (FP) SDHA, iron-sulfur protein (IP) SDHB, and a cytochrome b560 composed of SDHC and SDHD. It depends on heme b as a cofactor.

Its subcellular location is the mitochondrion inner membrane. Its pathway is carbohydrate metabolism; tricarboxylic acid cycle. Membrane-anchoring subunit of succinate dehydrogenase (SDH) that is involved in complex II of the mitochondrial electron transport chain and is responsible for transferring electrons from succinate to ubiquinone (coenzyme Q). SDH also oxidizes malate to the non-canonical enol form of oxaloacetate, enol-oxaloacetate. Enol-oxaloacetate, which is a potent inhibitor of the succinate dehydrogenase activity, is further isomerized into keto-oxaloacetate. This Homo sapiens (Human) protein is Succinate dehydrogenase cytochrome b560 subunit, mitochondrial (SDHC).